The following is a 310-amino-acid chain: Putative carboxypeptidase SCO6489 (310 aa).

The active-site Nucleophile is serine 116. Catalysis depends on charge relay system residues glutamate 212 and histidine 277.

This sequence belongs to the peptidase S66 family.

In Streptomyces coelicolor (strain ATCC BAA-471 / A3(2) / M145), this protein is Putative carboxypeptidase SCO6489.